The primary structure comprises 37 residues: Large ribosomal subunit protein bL36 (37 aa).

Belongs to the bacterial ribosomal protein bL36 family.

The polypeptide is Large ribosomal subunit protein bL36 (Persephonella marina (strain DSM 14350 / EX-H1)).